The sequence spans 348 residues: GMP reductase (348 aa).

An NADP(+)-binding site is contributed by 108 to 131 (ADFIKLRQILALSPSLKFICIDVA). The K(+) site is built by G181 and G183. C186 acts as the Thioimidate intermediate in catalysis. 216-239 (IVSDGGCTMPGDVAKAFGGGADFV) is a binding site for NADP(+).

The protein belongs to the IMPDH/GMPR family. GuaC type 1 subfamily. As to quaternary structure, homotetramer.

It carries out the reaction IMP + NH4(+) + NADP(+) = GMP + NADPH + 2 H(+). Its function is as follows. Catalyzes the irreversible NADPH-dependent deamination of GMP to IMP. It functions in the conversion of nucleobase, nucleoside and nucleotide derivatives of G to A nucleotides, and in maintaining the intracellular balance of A and G nucleotides. This chain is GMP reductase, found in Edwardsiella ictaluri (strain 93-146).